We begin with the raw amino-acid sequence, 272 residues long: Putative phosphoenolpyruvate synthase regulatory protein (272 aa).

151–158 (GVSRSGKT) lines the ADP pocket.

The protein belongs to the pyruvate, phosphate/water dikinase regulatory protein family. PSRP subfamily.

It carries out the reaction [pyruvate, water dikinase] + ADP = [pyruvate, water dikinase]-phosphate + AMP + H(+). The enzyme catalyses [pyruvate, water dikinase]-phosphate + phosphate + H(+) = [pyruvate, water dikinase] + diphosphate. Functionally, bifunctional serine/threonine kinase and phosphorylase involved in the regulation of the phosphoenolpyruvate synthase (PEPS) by catalyzing its phosphorylation/dephosphorylation. The sequence is that of Putative phosphoenolpyruvate synthase regulatory protein from Desulfotalea psychrophila (strain LSv54 / DSM 12343).